We begin with the raw amino-acid sequence, 391 residues long: Phosphoprotein (391 aa).

A phosphothreonine mark is found at Thr-10, Thr-16, and Thr-39. Residue Ser-69 is modified to Phosphoserine. Disordered stretches follow at residues Ser-82 to Thr-101 and Pro-143 to Val-208. A phosphothreonine mark is found at Thr-91, Thr-150, and Thr-165. Ser-188 is modified (phosphoserine). A compositionally biased stretch (polar residues) spans Leu-198–Val-208. The stretch at Ala-218–Gln-245 forms a coiled coil. Thr-250 bears the Phosphothreonine mark. Ser-257 is subject to Phosphoserine. Phosphothreonine is present on residues Thr-258 and Thr-282. Ser-292 and Ser-294 each carry phosphoserine. Thr-298 carries the phosphothreonine modification. Ser-301 and Ser-374 each carry phosphoserine. Residues Ala-343 to Ile-391 form an interaction with the nucleoprotein region. Residues Met-348–Ile-391 form a x domain (XD) region. Residue Thr-375 is modified to Phosphothreonine.

The protein belongs to the rubulavirus/avulavirus P protein family. As to quaternary structure, homotetramer. Interacts (via multimerization domain) with polymerase L; this interaction forms the polymerase L-P complex. Interacts (via N-terminus) with N0 (via Ncore); this interaction allows P to chaperon N0 to avoid N polymerization before encapsidation. Interacts (via C-terminus) with N-RNA template; this interaction positions the polymerase on the template for both transcription and replication. Interacts with host RPS6KB1 kinase; this interaction may play a role in the viral replication and transcription.

Its subcellular location is the virion. In terms of biological role, essential cofactor of the RNA polymerase L that plays a central role in the transcription and replication by forming the polymerase complex with RNA polymerase L and recruiting L to the genomic N-RNA template for RNA synthesis. Also plays a central role in the encapsidation of nascent RNA chains by forming the encapsidation complex with the nucleocapsid protein N (N-P complex). Acts as a chaperone for newly synthesized free N protein, so-called N0, allowing encapsidation of nascent RNA chains during replication. The nucleoprotein protein N prevents excessive phosphorylation of P, which leads to down-regulation of viral transcription/ replication. Participates, together with N, in the formation of viral factories (viroplasms), which are large inclusions in the host cytoplasm where replication takes place. This Mumps orthorubulavirus (MuV) protein is Phosphoprotein (V/P).